A 187-amino-acid polypeptide reads, in one-letter code: Protein GrpE (187 aa).

The tract at residues 1–38 is disordered; it reads MSEEKQTVEQNETEEQEIIEEQAAADEQQEETNESELL. Acidic residues predominate over residues 11-34; sequence NETEEQEIIEEQAAADEQQEETNE.

This sequence belongs to the GrpE family. As to quaternary structure, homodimer.

The protein resides in the cytoplasm. Participates actively in the response to hyperosmotic and heat shock by preventing the aggregation of stress-denatured proteins, in association with DnaK and GrpE. It is the nucleotide exchange factor for DnaK and may function as a thermosensor. Unfolded proteins bind initially to DnaJ; upon interaction with the DnaJ-bound protein, DnaK hydrolyzes its bound ATP, resulting in the formation of a stable complex. GrpE releases ADP from DnaK; ATP binding to DnaK triggers the release of the substrate protein, thus completing the reaction cycle. Several rounds of ATP-dependent interactions between DnaJ, DnaK and GrpE are required for fully efficient folding. In Bacillus subtilis (strain 168), this protein is Protein GrpE.